We begin with the raw amino-acid sequence, 345 residues long: Serine proteinase inhibitor 2 (345 aa).

It belongs to the serpin family. Poxviruses subfamily.

It is found in the host cytoplasm. Viral serpin that inhibits both cysteine and serine proteinases involved in the regulation of host inflammatory and apoptosis processes. Major anti-apoptotic protein which inhibits both intrinsic and extrinsic pathways and strongly cleaves host CASP1 and CASP8 but is a rather poor inhibitor of host CASP3. Prevents the proteolytic activity of host interleukin-1-beta converting enzyme (ICE) and ICE-like enzymes. Can also block apoptosis through host tumor necrosis factor (TNF) receptor. The inhibition of host ICE is an example of a 'cross-class' interaction, in which a serpin inhibits a non-serine proteinase. Also inhibits granzyme B. This Vaccinia virus (strain Western Reserve) (VACV) protein is Serine proteinase inhibitor 2 (OPG199).